Here is a 67-residue protein sequence, read N- to C-terminus: Protein AaeX (67 aa).

2 helical membrane passes run 8 to 28 (VLFG…LPLF) and 47 to 67 (PALF…WLFI).

Belongs to the AaeX family.

It is found in the cell membrane. This chain is Protein AaeX, found in Edwardsiella piscicida.